The chain runs to 297 residues: Adrenocorticotropic hormone receptor (297 aa).

The Extracellular portion of the chain corresponds to 1 to 23; the sequence is MKHIINSYENINNTARNNSDCPR. 2 N-linked (GlcNAc...) asparagine glycosylation sites follow: Asn-12 and Asn-17. 2 disulfide bridges follow: Cys-21–Cys-253 and Cys-245–Cys-251. Residues 24-49 form a helical membrane-spanning segment; that stretch reads VVLPEEIFFTISIVGVLENLIVLLAV. At 50–58 the chain is on the cytoplasmic side; sequence FKNKNLQAP. Residues 59–79 form a helical membrane-spanning segment; that stretch reads MYFFICSLAISDMLGSLYKIL. At 80-104 the chain is on the extracellular side; the sequence is ENILIILRNMGYLKPRGSFETTADD. The chain crosses the membrane as a helical span at residues 105-126; sequence IIDSLFVLSLLGSIFSLSVIAA. The Cytoplasmic segment spans residues 127–147; the sequence is DRYITIFHALRYHSIVTMRRT. Residues 148–168 traverse the membrane as a helical segment; that stretch reads VVVLTVIWTFCTGTGITMVIF. Residues 169–180 are Extracellular-facing; that stretch reads SHHVPTVITFTS. The chain crosses the membrane as a helical span at residues 181-199; sequence LFPLMLVFILCLYVHMFLL. The Cytoplasmic portion of the chain corresponds to 200–217; sequence ARSHTRKISTLPRANMKG. A helical membrane pass occupies residues 218–244; the sequence is AITLTILLGVFIFCWAPFVLHVLLMTF. At 245-256 the chain is on the extracellular side; that stretch reads CPSNPYCACYMS. Residues 257–278 form a helical membrane-spanning segment; that stretch reads LFQVNGMLIMCNAVIDPFIYAF. Over 279–297 the chain is Cytoplasmic; that stretch reads RSPELRDAFKKMIFCSRYW. A lipid anchor (S-palmitoyl cysteine) is attached at Cys-293.

The protein belongs to the G-protein coupled receptor 1 family. As to quaternary structure, homodimer. Interacts with corticotropin (ACTH). Interacts with MRAP; this interaction targets MC2R to the plasma membrane. Interacts with MRAP2; competing with MRAP for binding to MC2R and impairing the binding of corticotropin (ACTH). In terms of processing, ubiquitinated by MGRN1 that may be involved in post-endocytic trafficking and/or degradation of internalized receptor. In terms of tissue distribution, melanocytes and corticoadrenal tissue.

It is found in the cell membrane. Its function is as follows. Hormone receptor primarily expressed in adrenal cortex that plays a key role in regulating adrenocortical function. Upon corticotropin (ACTH) binding, facilitates the release of adrenal glucocorticoids, including cortisol and corticosterone. In addition, MC2R is required for fetal and neonatal adrenal gland development. Mechanistically, activates adenylate cyclase (cAMP), the MAPK cascade as well as the cAMP-dependent protein kinase A pathway leading to steroidogenic factor 1/NR5A1-mediated transcriptional activation. This is Adrenocorticotropic hormone receptor (MC2R) from Homo sapiens (Human).